The chain runs to 296 residues: 4-hydroxybenzoate octaprenyltransferase (296 aa).

Helical transmembrane passes span 28–48 (PIGI…AGKG), 52–72 (LNTV…GCVI), 102–122 (ALVL…FTNS), 123–140 (TTIW…CYPF), 146–166 (YYPQ…AFTA), 169–189 (GELP…TVGY), 219–239 (VIIL…GSRF), 241–261 (LGAF…WEFW), and 275–295 (FLHN…DYAL).

The protein belongs to the UbiA prenyltransferase family. Mg(2+) serves as cofactor.

The protein localises to the cell inner membrane. The catalysed reaction is all-trans-octaprenyl diphosphate + 4-hydroxybenzoate = 4-hydroxy-3-(all-trans-octaprenyl)benzoate + diphosphate. It participates in cofactor biosynthesis; ubiquinone biosynthesis. Its function is as follows. Catalyzes the prenylation of para-hydroxybenzoate (PHB) with an all-trans polyprenyl group. Mediates the second step in the final reaction sequence of ubiquinone-8 (UQ-8) biosynthesis, which is the condensation of the polyisoprenoid side chain with PHB, generating the first membrane-bound Q intermediate 3-octaprenyl-4-hydroxybenzoate. The protein is 4-hydroxybenzoate octaprenyltransferase of Pseudomonas syringae pv. tomato (strain ATCC BAA-871 / DC3000).